Consider the following 217-residue polypeptide: Small ribosomal subunit protein uS3 (217 aa).

The 69-residue stretch at 38–106 (IRKFIDNELK…KVHINVIEIK (69 aa)) folds into the KH type-2 domain.

The protein belongs to the universal ribosomal protein uS3 family. In terms of assembly, part of the 30S ribosomal subunit. Forms a tight complex with proteins S10 and S14.

Its function is as follows. Binds the lower part of the 30S subunit head. Binds mRNA in the 70S ribosome, positioning it for translation. The polypeptide is Small ribosomal subunit protein uS3 (Staphylococcus epidermidis (strain ATCC 35984 / DSM 28319 / BCRC 17069 / CCUG 31568 / BM 3577 / RP62A)).